The chain runs to 400 residues: MAAEIQPKPLTRKPILLQRMEGSQEVVNMAVIVPKEEGVISVSEDRTVRVWLKRDSGQYWPSVYHAMPSPCSCMSFNPETRRLSIGLDNGTISEFILSEDYNKMTPVKNYQAHQSRVTMILFVLELEWVLSTGQDKQFAWHCSESGQRLGGYRTSAVASGLQFDVETRHVFIGDHSGQVTILKLEQENCTLVTTFRGHTGGVTALCWDPVQRVLFSGSSDHSVIMWDIGGRKGTAIELQGHNDRVQALSYAQHTRQLISCGGDGGIVVWNMDVERQETPEWLDSDSCQKCDQPFFWNFKQMWDSKKIGLRQHHCRKCGKAVCGKCSSKRSSIPLMGFEFEVRVCDSCHEAITDEERAPTATFHDSKHNIVHVHFDATRGWLLTSGTDKVIKLWDMTPVVS.

WD repeat units follow at residues 22-61 (GSQE…QYWP), 66-105 (AMPS…NKMT), 112-150 (AHQS…QRLG), 153-192 (RTSA…CTLV), 197-236 (GHTG…GTAI), and 240-279 (GHND…QETP). An FYVE-type zinc finger spans residues 281–352 (WLDSDSCQKC…VCDSCHEAIT (72 aa)). The Zn(2+) site is built by C287, C290, C314, C317, C322, C325, C344, and C347. The stretch at 364 to 399 (DSKHNIVHVHFDATRGWLLTSGTDKVIKLWDMTPVV) is one WD 7 repeat.

In terms of assembly, homodimer. Interacts (via WD repeats 1-3) with AKT1, AKT2, PRKCZ and PRKCI. Interacts with VAMP2. Forms a complex with VAMP2 and PRKCZ. Interacts with FOXO1. Forms a complex with AKT1 and FOXO1.

The protein localises to the endosome. It is found in the early endosome. The protein resides in the cytoplasm. Its function is as follows. Acts in an adapter protein-like fashion to mediate the interaction between the kinase PRKCZ and its substrate VAMP2 and increases the PRKCZ-dependent phosphorylation of VAMP2. Positively regulates adipocyte differentiation, by facilitating the phosphorylation and thus inactivation of the anti-adipogenetic transcription factor FOXO1 by the kinase AKT1. Plays a role in endosomal control of AKT2 signaling; required for insulin-stimulated AKT2 phosphorylation and glucose uptake and insulin-stimulated phosphorylation of AKT2 substrates. Participates in transferrin receptor endocytosis. This Homo sapiens (Human) protein is WD repeat and FYVE domain-containing protein 2 (WDFY2).